The following is a 518-amino-acid chain: 2-isopropylmalate synthase (518 aa).

The 263-residue stretch at 5–267 (VIIFDTTLRD…STNIKHKEIY (263 aa)) folds into the Pyruvate carboxyltransferase domain. Residues aspartate 14, histidine 202, histidine 204, and asparagine 238 each coordinate Mn(2+). The segment at 392–518 (SLSFFSVQSI…KLKTLKKVNN (127 aa)) is regulatory domain.

This sequence belongs to the alpha-IPM synthase/homocitrate synthase family. LeuA type 1 subfamily. Homodimer. Mn(2+) serves as cofactor.

Its subcellular location is the cytoplasm. The catalysed reaction is 3-methyl-2-oxobutanoate + acetyl-CoA + H2O = (2S)-2-isopropylmalate + CoA + H(+). The protein operates within amino-acid biosynthesis; L-leucine biosynthesis; L-leucine from 3-methyl-2-oxobutanoate: step 1/4. Its function is as follows. Catalyzes the condensation of the acetyl group of acetyl-CoA with 3-methyl-2-oxobutanoate (2-ketoisovalerate) to form 3-carboxy-3-hydroxy-4-methylpentanoate (2-isopropylmalate). This Buchnera aphidicola subsp. Schizaphis graminum (strain Sg) protein is 2-isopropylmalate synthase.